Here is a 248-residue protein sequence, read N- to C-terminus: 2,3-bisphosphoglycerate-dependent phosphoglycerate mutase (248 aa).

Residues 8 to 15 (RHGESEWN), 21 to 22 (TG), Arg60, 87 to 90 (ERHY), Lys98, 114 to 115 (RR), and 183 to 184 (GN) contribute to the substrate site. The active-site Tele-phosphohistidine intermediate is His9. Glu87 serves as the catalytic Proton donor/acceptor.

The protein belongs to the phosphoglycerate mutase family. BPG-dependent PGAM subfamily.

It carries out the reaction (2R)-2-phosphoglycerate = (2R)-3-phosphoglycerate. Its pathway is carbohydrate degradation; glycolysis; pyruvate from D-glyceraldehyde 3-phosphate: step 3/5. Functionally, catalyzes the interconversion of 2-phosphoglycerate and 3-phosphoglycerate. This chain is 2,3-bisphosphoglycerate-dependent phosphoglycerate mutase, found in Borreliella afzelii (strain PKo) (Borrelia afzelii).